The sequence spans 198 residues: Recombination protein RecR (198 aa).

Residues 56-71 (CKICHSLTENEICDIC) form a C4-type zinc finger. The 96-residue stretch at 79 to 174 (HLLCVVESPA…HMTRIAQGVP (96 aa)) folds into the Toprim domain.

Belongs to the RecR family.

Its function is as follows. May play a role in DNA repair. It seems to be involved in an RecBC-independent recombinational process of DNA repair. It may act with RecF and RecO. The protein is Recombination protein RecR of Acinetobacter baylyi (strain ATCC 33305 / BD413 / ADP1).